Here is a 382-residue protein sequence, read N- to C-terminus: Pyrimidine monooxygenase RutA (382 aa).

FMN is bound by residues 68 to 69 (IK), N134, E143, 159 to 160 (RY), and S209.

Belongs to the NtaA/SnaA/DszA monooxygenase family. RutA subfamily.

The enzyme catalyses uracil + FMNH2 + NADH + O2 = (Z)-3-ureidoacrylate + FMN + NAD(+) + H2O + H(+). The catalysed reaction is thymine + FMNH2 + NADH + O2 = (Z)-2-methylureidoacrylate + FMN + NAD(+) + H2O + H(+). Functionally, catalyzes the pyrimidine ring opening between N-3 and C-4 by an unusual flavin hydroperoxide-catalyzed mechanism, adding oxygen atoms in the process to yield ureidoacrylate peracid, that immediately reacts with FMN forming ureidoacrylate and FMN-N(5)-oxide. The FMN-N(5)-oxide reacts spontaneously with NADH to produce FMN. Requires the flavin reductase RutF to regenerate FMN in vivo. This chain is Pyrimidine monooxygenase RutA, found in Escherichia coli O81 (strain ED1a).